Here is a 447-residue protein sequence, read N- to C-terminus: Glucose-6-phosphate isomerase (447 aa).

Glutamate 287 serves as the catalytic Proton donor. Catalysis depends on residues histidine 308 and lysine 422.

The protein belongs to the GPI family.

Its subcellular location is the cytoplasm. It catalyses the reaction alpha-D-glucose 6-phosphate = beta-D-fructose 6-phosphate. It participates in carbohydrate biosynthesis; gluconeogenesis. The protein operates within carbohydrate degradation; glycolysis; D-glyceraldehyde 3-phosphate and glycerone phosphate from D-glucose: step 2/4. In terms of biological role, catalyzes the reversible isomerization of glucose-6-phosphate to fructose-6-phosphate. The protein is Glucose-6-phosphate isomerase of Heliobacterium modesticaldum (strain ATCC 51547 / Ice1).